We begin with the raw amino-acid sequence, 725 residues long: Methionine--tRNA ligase (725 aa).

The 'HIGH' region signature appears at 27-37; that stretch reads PYANGQIHIGH. Cys158, Cys161, Cys171, and Cys174 together coordinate Zn(2+). Positions 348 to 352 match the 'KMSKS' region motif; it reads KMSKS. ATP is bound at residue Lys351. The tRNA-binding domain maps to 619–725; that stretch reads DFAKIDLRIA…SGAKPGMRVK (107 aa).

It belongs to the class-I aminoacyl-tRNA synthetase family. MetG type 1 subfamily. As to quaternary structure, homodimer. Zn(2+) serves as cofactor.

The protein resides in the cytoplasm. It carries out the reaction tRNA(Met) + L-methionine + ATP = L-methionyl-tRNA(Met) + AMP + diphosphate. Its function is as follows. Is required not only for elongation of protein synthesis but also for the initiation of all mRNA translation through initiator tRNA(fMet) aminoacylation. The protein is Methionine--tRNA ligase of Burkholderia pseudomallei (strain 1106a).